The following is a 458-amino-acid chain: ATP synthase subunit beta (458 aa).

148–155 contributes to the ATP binding site; the sequence is GGAGVGKT.

It belongs to the ATPase alpha/beta chains family. As to quaternary structure, F-type ATPases have 2 components, CF(1) - the catalytic core - and CF(0) - the membrane proton channel. CF(1) has five subunits: alpha(3), beta(3), gamma(1), delta(1), epsilon(1). CF(0) has three main subunits: a(1), b(2) and c(9-12). The alpha and beta chains form an alternating ring which encloses part of the gamma chain. CF(1) is attached to CF(0) by a central stalk formed by the gamma and epsilon chains, while a peripheral stalk is formed by the delta and b chains.

It is found in the cell inner membrane. It catalyses the reaction ATP + H2O + 4 H(+)(in) = ADP + phosphate + 5 H(+)(out). Functionally, produces ATP from ADP in the presence of a proton gradient across the membrane. The catalytic sites are hosted primarily by the beta subunits. This Laribacter hongkongensis (strain HLHK9) protein is ATP synthase subunit beta.